A 295-amino-acid polypeptide reads, in one-letter code: Small ribosomal subunit protein mS23 (295 aa).

The tract at residues 249–295 (IGSVVEEEKSQSSLFEDLLSNDNLQSEPEVEQSGQQQQQEQPKQETN) is disordered. Residues 273 to 289 (QSEPEVEQSGQQQQQEQ) show a composition bias toward low complexity.

This sequence belongs to the mitochondrion-specific ribosomal protein mS23 family. Component of the mitochondrial small ribosomal subunit (mt-SSU).

It is found in the mitochondrion. Component of the mitochondrial ribosome (mitoribosome), a dedicated translation machinery responsible for the synthesis of mitochondrial genome-encoded proteins, including at least some of the essential transmembrane subunits of the mitochondrial respiratory chain. The mitoribosomes are attached to the mitochondrial inner membrane and translation products are cotranslationally integrated into the membrane. The chain is Small ribosomal subunit protein mS23 (RSM25) from Candida albicans (strain SC5314 / ATCC MYA-2876) (Yeast).